The following is a 60-amino-acid chain: uncharacterized protein (60 aa).

It to E.coli YjeQ and H.influenzae HI_1714.

This is an uncharacterized protein from Azotobacter vinelandii.